A 219-amino-acid chain; its full sequence is Deoxyribose-phosphate aldolase (219 aa).

Asp89 acts as the Proton donor/acceptor in catalysis. The active-site Schiff-base intermediate with acetaldehyde is Lys151. Lys180 (proton donor/acceptor) is an active-site residue.

It belongs to the DeoC/FbaB aldolase family. DeoC type 1 subfamily.

The protein localises to the cytoplasm. The catalysed reaction is 2-deoxy-D-ribose 5-phosphate = D-glyceraldehyde 3-phosphate + acetaldehyde. Its pathway is carbohydrate degradation; 2-deoxy-D-ribose 1-phosphate degradation; D-glyceraldehyde 3-phosphate and acetaldehyde from 2-deoxy-alpha-D-ribose 1-phosphate: step 2/2. Catalyzes a reversible aldol reaction between acetaldehyde and D-glyceraldehyde 3-phosphate to generate 2-deoxy-D-ribose 5-phosphate. This Coprothermobacter proteolyticus (strain ATCC 35245 / DSM 5265 / OCM 4 / BT) protein is Deoxyribose-phosphate aldolase.